Reading from the N-terminus, the 86-residue chain is Large ribosomal subunit protein eL43 (86 aa).

Zn(2+) is bound by residues C38, C41, C56, and C59. The C4-type zinc finger occupies 38-59; the sequence is CPVCGRKAVRRISTGIWQCQKC.

The protein belongs to the eukaryotic ribosomal protein eL43 family. As to quaternary structure, part of the 50S ribosomal subunit. Requires Zn(2+) as cofactor.

The sequence is that of Large ribosomal subunit protein eL43 from Thermococcus kodakarensis (strain ATCC BAA-918 / JCM 12380 / KOD1) (Pyrococcus kodakaraensis (strain KOD1)).